Consider the following 518-residue polypeptide: Glutamate--cysteine ligase (518 aa).

Belongs to the glutamate--cysteine ligase type 1 family. Type 1 subfamily.

The enzyme catalyses L-cysteine + L-glutamate + ATP = gamma-L-glutamyl-L-cysteine + ADP + phosphate + H(+). The protein operates within sulfur metabolism; glutathione biosynthesis; glutathione from L-cysteine and L-glutamate: step 1/2. The chain is Glutamate--cysteine ligase from Salmonella arizonae (strain ATCC BAA-731 / CDC346-86 / RSK2980).